Consider the following 474-residue polypeptide: Protein IFIT1 homolog B (474 aa).

10 TPR repeats span residues Val52–Glu85, Leu95–Phe128, Val141–Asn174, Ala182–Asp216, Tyr218–Gln250, Ala251–Ser284, Ala305–Phe339, Glu340–Glu373, Gln378–Ser412, and Val437–Leu470.

The protein belongs to the IFIT family.

In terms of biological role, IFIT1B is likely non-functional, lacking the critical antiviral role of IFIT1. Unlike IFIT1, which is essential in the innate immune response as part of an interferon-dependent multiprotein complex, IFIT1B does not prevent the translation of viral RNAs that lack host-specific 2'-O-methylation at their 5' cap. Consequently, it probably cannot inhibit their translation by competing with the host translation machinery. This Homo sapiens (Human) protein is Protein IFIT1 homolog B.